The primary structure comprises 585 residues: Arginine--tRNA ligase (585 aa).

A 'HIGH' region motif is present at residues 126–136 (PNIAKEMHVGH).

Belongs to the class-I aminoacyl-tRNA synthetase family. As to quaternary structure, monomer.

It is found in the cytoplasm. It carries out the reaction tRNA(Arg) + L-arginine + ATP = L-arginyl-tRNA(Arg) + AMP + diphosphate. This chain is Arginine--tRNA ligase, found in Rippkaea orientalis (strain PCC 8801 / RF-1) (Cyanothece sp. (strain PCC 8801)).